The primary structure comprises 328 residues: 4-hydroxythreonine-4-phosphate dehydrogenase (328 aa).

Thr125 lines the substrate pocket. Residues His160, His203, and His269 each coordinate a divalent metal cation. Residues Lys277, Asn286, and Arg295 each contribute to the substrate site.

This sequence belongs to the PdxA family. In terms of assembly, homodimer. It depends on a divalent metal cation as a cofactor.

Its subcellular location is the cytoplasm. The catalysed reaction is 4-(phosphooxy)-L-threonine + NAD(+) = 3-amino-2-oxopropyl phosphate + CO2 + NADH. Its pathway is cofactor biosynthesis; pyridoxine 5'-phosphate biosynthesis; pyridoxine 5'-phosphate from D-erythrose 4-phosphate: step 4/5. Its function is as follows. Catalyzes the NAD(P)-dependent oxidation of 4-(phosphooxy)-L-threonine (HTP) into 2-amino-3-oxo-4-(phosphooxy)butyric acid which spontaneously decarboxylates to form 3-amino-2-oxopropyl phosphate (AHAP). This Synechococcus sp. (strain RCC307) protein is 4-hydroxythreonine-4-phosphate dehydrogenase.